The primary structure comprises 73 residues: Large ribosomal subunit protein uL24 (73 aa).

A compositionally biased stretch (basic and acidic residues) spans 53-65; sequence NPKGGFIKKEKPM. Positions 53 to 73 are disordered; sequence NPKGGFIKKEKPMHISNVKKA.

The protein belongs to the universal ribosomal protein uL24 family. As to quaternary structure, part of the 50S ribosomal subunit.

One of two assembly initiator proteins, it binds directly to the 5'-end of the 23S rRNA, where it nucleates assembly of the 50S subunit. In terms of biological role, one of the proteins that surrounds the polypeptide exit tunnel on the outside of the subunit. The chain is Large ribosomal subunit protein uL24 from Helicobacter pylori (strain J99 / ATCC 700824) (Campylobacter pylori J99).